A 108-amino-acid chain; its full sequence is Nucleoid-associated protein Bcen_6253 (108 aa).

Residues 85-95 (ATSQEKMSGMT) are compositionally biased toward polar residues. The segment at 85–108 (ATSQEKMSGMTSGLPLPPGFKLPF) is disordered. Over residues 99 to 108 (PLPPGFKLPF) the composition is skewed to pro residues.

This sequence belongs to the YbaB/EbfC family. Homodimer.

The protein localises to the cytoplasm. The protein resides in the nucleoid. In terms of biological role, binds to DNA and alters its conformation. May be involved in regulation of gene expression, nucleoid organization and DNA protection. The polypeptide is Nucleoid-associated protein Bcen_6253 (Burkholderia orbicola (strain AU 1054)).